A 190-amino-acid polypeptide reads, in one-letter code: ATP synthase subunit b (190 aa).

Residues 24–44 (IVGSLICFVVILFFFWKLVLP) form a helical membrane-spanning segment.

The protein belongs to the ATPase B chain family. As to quaternary structure, F-type ATPases have 2 components, F(1) - the catalytic core - and F(0) - the membrane proton channel. F(1) has five subunits: alpha(3), beta(3), gamma(1), delta(1), epsilon(1). F(0) has three main subunits: a(1), b(2) and c(10-14). The alpha and beta chains form an alternating ring which encloses part of the gamma chain. F(1) is attached to F(0) by a central stalk formed by the gamma and epsilon chains, while a peripheral stalk is formed by the delta and b chains.

Its subcellular location is the cell membrane. In terms of biological role, f(1)F(0) ATP synthase produces ATP from ADP in the presence of a proton or sodium gradient. F-type ATPases consist of two structural domains, F(1) containing the extramembraneous catalytic core and F(0) containing the membrane proton channel, linked together by a central stalk and a peripheral stalk. During catalysis, ATP synthesis in the catalytic domain of F(1) is coupled via a rotary mechanism of the central stalk subunits to proton translocation. Functionally, component of the F(0) channel, it forms part of the peripheral stalk, linking F(1) to F(0). In Leifsonia xyli subsp. xyli (strain CTCB07), this protein is ATP synthase subunit b.